A 154-amino-acid polypeptide reads, in one-letter code: uncharacterized protein (154 aa).

5 consecutive transmembrane segments (helical) span residues 5–24, 29–48, 53–75, 87–109, and 124–146; these read TLIIAVAGLFAVASSIGVLL, FYAALYMSVTMLFVAAIYAA, PVVVIIALIFVGAVGIVTVAIAA, IFWVVPVIVVFAILALAYASMAV, and ATDYFFVVAFLFTLVVLMMLSAI.

Its subcellular location is the cell membrane. This is an uncharacterized protein from Archaeoglobus fulgidus (strain ATCC 49558 / DSM 4304 / JCM 9628 / NBRC 100126 / VC-16).